We begin with the raw amino-acid sequence, 45 residues long: MPMATTIDGTDYTNIMPSTVSTTVYLGGSIGIDTSTTGFTCFSWY.

Belongs to the coronaviruses ns4/ns4.8 protein family.

The protein is Non-structural protein of 4.8 kDa of Bovine coronavirus (strain LY-138) (BCoV).